Reading from the N-terminus, the 258-residue chain is Acetylglutamate kinase (258 aa).

Substrate contacts are provided by residues 44 to 45 (GG), Arg-66, and Asn-158. ATP is bound by residues 181–186 (DVSGIL) and 209–211 (IIT).

It belongs to the acetylglutamate kinase family. ArgB subfamily. As to quaternary structure, homodimer.

The protein localises to the cytoplasm. It catalyses the reaction N-acetyl-L-glutamate + ATP = N-acetyl-L-glutamyl 5-phosphate + ADP. Its pathway is amino-acid biosynthesis; L-arginine biosynthesis; N(2)-acetyl-L-ornithine from L-glutamate: step 2/4. Functionally, catalyzes the ATP-dependent phosphorylation of N-acetyl-L-glutamate. This chain is Acetylglutamate kinase, found in Escherichia coli O157:H7.